The sequence spans 264 residues: UPF0162 protein PM0557 (264 aa).

This sequence belongs to the UPF0162 family.

This is UPF0162 protein PM0557 from Pasteurella multocida (strain Pm70).